Consider the following 631-residue polypeptide: Eukaryotic translation initiation factor 2-alpha kinase 1 (631 aa).

The tract at residues methionine 1–serine 34 is disordered. An SIFI-degron motif is present at residues leucine 85–leucine 104. In terms of domain architecture, Protein kinase spans phenylalanine 167–phenylalanine 583. ATP contacts are provided by residues leucine 173 to valine 181 and lysine 196. Positions glutamine 260 to asparagine 301 are disordered. Threonine 285 is subject to Phosphothreonine. Residues threonine 285–asparagine 301 are compositionally biased toward basic and acidic residues. Residues alanine 410–methionine 415 form an HRM 1 repeat. The Proton acceptor role is filled by aspartate 442. Phosphothreonine; by autocatalysis occurs at positions 486 and 488. The residue at position 493 (threonine 493) is a Phosphothreonine. One copy of the HRM 2 repeat lies at arginine 552 to alanine 557.

The protein belongs to the protein kinase superfamily. Ser/Thr protein kinase family. GCN2 subfamily. As to quaternary structure, synthesized in an inactive form that binds to the N-terminal domain of CDC37. Has to be associated with a multiprotein complex containing Hsp90, CDC37 and PPP5C for maturation and activation by autophosphorylation. The phosphatase PPP5C modulates this activation. Homodimer; homodimerizes in presence of heme, forming a disulfide-linked inactive homodimer. Interacts with DELE1; binds both to full-length DELE1 and processed form of DELE1 (S-DELE1) in response to stress, leading to activate its protein kinase activity and trigger the integrated stress response (ISR). Activated by autophosphorylation; phosphorylated predominantly on serine and threonine residues, but also on tyrosine residues. Autophosphorylation at Thr-488 is required for kinase activation. The active autophosphorylated form apparently is largely refractory to cellular heme fluctuations. In terms of processing, ubiquitinated and degraded by the SIFI complex once the mitochondrial stress has been resolved, thereby providing stress response silencing. Within the SIFI complex, UBR4 initiates ubiquitin chain that are further elongated or branched by KCMF1.

Its subcellular location is the cytoplasm. The catalysed reaction is L-seryl-[protein] + ATP = O-phospho-L-seryl-[protein] + ADP + H(+). The enzyme catalyses L-threonyl-[protein] + ATP = O-phospho-L-threonyl-[protein] + ADP + H(+). In normal conditions, the protein kinase activity is inhibited; inhibition is relieved by various stress conditions. Inhibited by heme: in presence of heme, forms a disulfide-linked inactive homodimer. Heme depletion relieves inhibition and stimulates kinase activity by autophosphorylation. Inhibited by the heme metabolites biliverdin and bilirubin. Induced by oxidative stress generated by arsenite treatment. Binding of nitric oxide (NO) to the heme iron in the N-terminal heme-binding domain activates the kinase activity, while binding of carbon monoxide (CO) suppresses kinase activity. Protein kinase activity is also activated upon binding to DELE1 in response to various stress, triggering the integrated stress response (ISR): activated by full-length DELE1 in response to iron deficiency, while it is activated by the processed form of DELE1 (S-DELE1) in response to mitochondrial stress. In terms of biological role, metabolic-stress sensing protein kinase that phosphorylates the alpha subunit of eukaryotic translation initiation factor 2 (EIF2S1/eIF-2-alpha) in response to various stress conditions. Key activator of the integrated stress response (ISR) required for adaptation to various stress, such as heme deficiency, oxidative stress, osmotic shock, mitochondrial dysfunction and heat shock. EIF2S1/eIF-2-alpha phosphorylation in response to stress converts EIF2S1/eIF-2-alpha in a global protein synthesis inhibitor, leading to a global attenuation of cap-dependent translation, while concomitantly initiating the preferential translation of ISR-specific mRNAs, such as the transcriptional activator ATF4, and hence allowing ATF4-mediated reprogramming. Acts as a key sensor of heme-deficiency: in normal conditions, binds hemin via a cysteine thiolate and histidine nitrogenous coordination, leading to inhibit the protein kinase activity. This binding occurs with moderate affinity, allowing it to sense the heme concentration within the cell: heme depletion relieves inhibition and stimulates kinase activity, activating the ISR. Thanks to this unique heme-sensing capacity, plays a crucial role to shut off protein synthesis during acute heme-deficient conditions. In red blood cells (RBCs), controls hemoglobin synthesis ensuring a coordinated regulation of the synthesis of its heme and globin moieties. It thereby plays an essential protective role for RBC survival in anemias of iron deficiency. Iron deficiency also triggers activation by full-length DELE1. Also activates the ISR in response to mitochondrial dysfunction: HRI/EIF2AK1 protein kinase activity is activated upon binding to the processed form of DELE1 (S-DELE1), thereby promoting the ATF4-mediated reprogramming. Also acts as an activator of mitophagy in response to mitochondrial damage: catalyzes phosphorylation of eIF-2-alpha (EIF2S1) following activation by S-DELE1, thereby promoting mitochondrial localization of EIF2S1, triggering PRKN-independent mitophagy. In Macaca fascicularis (Crab-eating macaque), this protein is Eukaryotic translation initiation factor 2-alpha kinase 1.